We begin with the raw amino-acid sequence, 146 residues long: Neuropeptide Y receptor type 2 (146 aa).

The Extracellular portion of the chain corresponds to K1–H8. The cysteines at positions 7 and 87 are disulfide-linked. A helical membrane pass occupies residues L9–A29. At L30–S49 the chain is on the cytoplasmic side. Residues F50–F70 traverse the membrane as a helical segment. At R71–G100 the chain is on the extracellular side. The chain crosses the membrane as a helical span at residues T101–F121. At S122–R146 the chain is on the cytoplasmic side.

It belongs to the G-protein coupled receptor 1 family.

It is found in the cell membrane. In terms of biological role, receptor for neuropeptide Y and peptide YY. This chain is Neuropeptide Y receptor type 2 (NPY2R), found in Ovis aries (Sheep).